Consider the following 260-residue polypeptide: Universal stress protein PHOS34 (260 aa).

A chloroplast-targeting transit peptide spans 1 to 33 (MNPDSDYPHLPNIKIHHPSSPRHSHHHSSSTPS). The segment at 1 to 42 (MNPDSDYPHLPNIKIHHPSSPRHSHHHSSSTPSAATPTPTAG) is disordered. The span at 14 to 28 (KIHHPSSPRHSHHHS) shows a compositional bias: basic residues. Position 18 (Pro18) interacts with ATP. Phosphoserine; by MAPK3 and MAPK6 is present on Ser20. Residues 29 to 41 (SSTPSAATPTPTA) show a composition bias toward low complexity. An ATP-binding site is contributed by Val80. The disordered stretch occupies residues 92–118 (GPLPLQTPPPPSAATDPGAQPKPSQED). ATP contacts are provided by residues 170–179 (GSRGFGAEKR) and 187–189 (SVS). A disordered region spans residues 209–260 (RDGPAPPGNVGATREAIVTVKSRRDDDDDDDEDHEAKIAAAASDHHEHIKDE). Residue Ser230 is modified to Phosphoserine. The span at 251 to 260 (SDHHEHIKDE) shows a compositional bias: basic and acidic residues.

This sequence belongs to the universal stress protein A family. In terms of processing, phosphorylated by MAPK3 and MAPK6 after pathogenic elicitation (e.g. bacterial flg22, Phytophthora infestans zoospores and xylanase).

The protein localises to the plastid. It localises to the chloroplast. The sequence is that of Universal stress protein PHOS34 from Arabidopsis thaliana (Mouse-ear cress).